Here is a 382-residue protein sequence, read N- to C-terminus: UDP-N-acetylglucosamine--N-acetylmuramyl-(pentapeptide) pyrophosphoryl-undecaprenol N-acetylglucosamine transferase (382 aa).

Residues 22-24, Asn134, Arg186, Ser212, 285-290, and Gln311 each bind UDP-N-acetyl-alpha-D-glucosamine; these read TGG and ALTVAE.

This sequence belongs to the glycosyltransferase 28 family. MurG subfamily.

The protein resides in the cell inner membrane. The catalysed reaction is di-trans,octa-cis-undecaprenyl diphospho-N-acetyl-alpha-D-muramoyl-L-alanyl-D-glutamyl-meso-2,6-diaminopimeloyl-D-alanyl-D-alanine + UDP-N-acetyl-alpha-D-glucosamine = di-trans,octa-cis-undecaprenyl diphospho-[N-acetyl-alpha-D-glucosaminyl-(1-&gt;4)]-N-acetyl-alpha-D-muramoyl-L-alanyl-D-glutamyl-meso-2,6-diaminopimeloyl-D-alanyl-D-alanine + UDP + H(+). Its pathway is cell wall biogenesis; peptidoglycan biosynthesis. In terms of biological role, cell wall formation. Catalyzes the transfer of a GlcNAc subunit on undecaprenyl-pyrophosphoryl-MurNAc-pentapeptide (lipid intermediate I) to form undecaprenyl-pyrophosphoryl-MurNAc-(pentapeptide)GlcNAc (lipid intermediate II). The protein is UDP-N-acetylglucosamine--N-acetylmuramyl-(pentapeptide) pyrophosphoryl-undecaprenol N-acetylglucosamine transferase of Pseudoalteromonas atlantica (strain T6c / ATCC BAA-1087).